The following is a 299-amino-acid chain: Meso-diaminopimelate D-dehydrogenase (299 aa).

NADP(+) is bound by residues 11–14, Arg36, 67–70, 90–92, and 119–123; these read YGNI, CTPT, SFD, and AGWDP. Residues Asp92, Asp122, Phe146, 152–153, Thr171, Arg181, His227, and Asn253 contribute to the substrate site; that span reads MG.

The protein belongs to the diaminopimelate dehydrogenase family. As to quaternary structure, homodimer.

The enzyme catalyses meso-2,6-diaminopimelate + NADP(+) + H2O = (S)-2-amino-6-oxoheptanedioate + NH4(+) + NADPH + H(+). The protein operates within amino-acid biosynthesis; L-lysine biosynthesis via DAP pathway; DL-2,6-diaminopimelate from (S)-tetrahydrodipicolinate: step 1/1. Functionally, catalyzes the reversible NADPH-dependent reductive amination of L-2-amino-6-oxopimelate, the acyclic form of L-tetrahydrodipicolinate, to generate the meso compound, D,L-2,6-diaminopimelate. Probably plays a role in lysine biosynthesis. Exhibits a high substrate specificity for meso-2,6-diaminopimelate (m-DAP), since the activity with L,L-2,6-diaminopimelate is less than 5% of the activity observed with m-DAP. Can use NAD(+) only very poorly since the activity observed in the presence of NAD(+) is about 14% of that with NADP(+). This is Meso-diaminopimelate D-dehydrogenase (ddh) from Bacteroides fragilis (strain ATCC 25285 / DSM 2151 / CCUG 4856 / JCM 11019 / LMG 10263 / NCTC 9343 / Onslow / VPI 2553 / EN-2).